Reading from the N-terminus, the 794-residue chain is MEDGPSNNASCFRRLTECFLSPSLTDEKVKAYLSLHPQVLDEFVSESVSAETVEKWLKRKNNKAEDEPSPKEVSRYQDTNMQGVVYELNSYIEQRLDTGGDNHLLLYELSSIIRIATKADGFALYFLGECNNSLCVFTPPGMKEGQPRLIPAGPITQGTTISAYVAKSRKTLLVEDILGDERFPRGTGLESGTRIQSVLCLPIVTAIGDLIGILELYRHWGKEAFCLSHQEVATANLAWASVAIHQVQVCRGLAKQTELNDFLLDVSKTYFDNIVAIDSLLEHIMIYAKNLVNADRCALFQVDHKNKELYSDLFDIGEEKEGKPVFKKTKEIRFSIEKGIAGQVARTGEVLNIPDAYADPRFNREVDLYTGYTTRNILCMPIVSRGSVIGVVQMVNKISGSAFSKTDENNFKMFAVFCALALHCANMYHRIRHSECIYRVTMEKLSYHSICTSEEWQGLMHFNLPARICRDIELFHFDIGPFENMWPGIFVYMIHRSCGTSCFELEKLCRFIMSVKKNYRRVPYHNWKHAVTVAHCMYAILQNNNGLFTDLERKGLLIACLCHDLDHRGFSNSYLQKFDHPLAALYSTSTMEQHHFSQTVSILQLEGHNIFSTLSSSEYEQVLEIIRKAIIATDLALYFGNRKQLEEMYQTGSLNLHNQSHRDRVIGLMMTACDLCSVTKLWPVTKLTANDIYAEFWAEGDEMKKLGIQPIPMMDRDKRDEVPQGQLGFYNAVAIPCYTTLTQILPPTEPLLKACRDNLNQWEKVIRGEETAMWISGPATSKSTSEKPTRKVDD.

3',5'-cyclic AMP contacts are provided by residues 296-297, 340-341, threonine 374, glutamine 393, and histidine 525; these read RC and IA. A PDEase domain is found at 452–769; sequence TSEEWQGLMH…NQWEKVIRGE (318 aa). Histidine 525 serves as the catalytic Proton donor. 3',5'-cyclic GMP is bound at residue histidine 525. A divalent metal cation contacts are provided by histidine 529, histidine 563, aspartate 564, and aspartate 674. Position 726 (glutamine 726) interacts with 3',5'-cyclic AMP. Residue glutamine 726 participates in 3',5'-cyclic GMP binding.

It belongs to the cyclic nucleotide phosphodiesterase family. Homodimer. The cofactor is a divalent metal cation. In terms of tissue distribution, detected in striatum and testis (at protein level). Detected in whole brain, hippocampus, olfactory bulb, striatum neurons and testis.

The protein resides in the cytoplasm. The protein localises to the cytosol. It catalyses the reaction a nucleoside 3',5'-cyclic phosphate + H2O = a nucleoside 5'-phosphate + H(+). The catalysed reaction is 3',5'-cyclic AMP + H2O = AMP + H(+). It carries out the reaction 3',5'-cyclic GMP + H2O = GMP + H(+). It participates in purine metabolism; 3',5'-cyclic AMP degradation; AMP from 3',5'-cyclic AMP: step 1/1. The protein operates within purine metabolism; 3',5'-cyclic GMP degradation; GMP from 3',5'-cyclic GMP: step 1/1. With respect to regulation, inhibited by dipyridamole and moderately by IBMX, zaprinast and rolipram. Plays a role in signal transduction by regulating the intracellular concentration of cyclic nucleotides. Can hydrolyze both cAMP and cGMP, but has higher affinity for cAMP and is more efficient with cAMP as substrate. This is cAMP and cAMP-inhibited cGMP 3',5'-cyclic phosphodiesterase 10A (Pde10a) from Rattus norvegicus (Rat).